The following is a 175-amino-acid chain: Endothelin-2 (175 aa).

The first 21 residues, Met1 to Gly21, serve as a signal peptide directing secretion. The propeptide occupies Gln22–Phe43. 2 disulfide bridges follow: Cys46/Cys60 and Cys48/Cys56. The propeptide occupies Val67–Arg175. The interval Cys93–His108 is endothelin-like.

Belongs to the endothelin/sarafotoxin family.

Its subcellular location is the secreted. In terms of biological role, vasoconstrictor. The sequence is that of Endothelin-2 (Edn2) from Mus musculus (Mouse).